A 342-amino-acid chain; its full sequence is GTPase Obg (342 aa).

Positions 1–159 (MQFIDRAEIE…RNLRLELKLL (159 aa)) constitute an Obg domain. An OBG-type G domain is found at 160 to 328 (AEVGIIGLPN…LLQAIWHRLD (169 aa)). Residues 166 to 173 (GLPNAGKS), 191 to 195 (FTTLV), 213 to 216 (DIPG), 280 to 283 (NKVD), and 309 to 311 (SAV) each bind GTP. Mg(2+) contacts are provided by Ser-173 and Thr-193.

Belongs to the TRAFAC class OBG-HflX-like GTPase superfamily. OBG GTPase family. Monomer. Mg(2+) is required as a cofactor.

It is found in the cytoplasm. Its function is as follows. An essential GTPase which binds GTP, GDP and possibly (p)ppGpp with moderate affinity, with high nucleotide exchange rates and a fairly low GTP hydrolysis rate. Plays a role in control of the cell cycle, stress response, ribosome biogenesis and in those bacteria that undergo differentiation, in morphogenesis control. In Crocosphaera subtropica (strain ATCC 51142 / BH68) (Cyanothece sp. (strain ATCC 51142)), this protein is GTPase Obg.